A 146-amino-acid chain; its full sequence is Large ribosomal subunit protein uL15 (146 aa).

The segment at 1–46 is disordered; it reads MAIELHDLKPAPGAHKAKTRVGRGEGSKGKTAGRGTKGTGARKNVP. The segment covering 29–43 has biased composition (low complexity); the sequence is GKTAGRGTKGTGARK.

Belongs to the universal ribosomal protein uL15 family. As to quaternary structure, part of the 50S ribosomal subunit.

In terms of biological role, binds to the 23S rRNA. The sequence is that of Large ribosomal subunit protein uL15 from Cutibacterium acnes (strain DSM 16379 / KPA171202) (Propionibacterium acnes).